A 359-amino-acid chain; its full sequence is Phospho-N-acetylmuramoyl-pentapeptide-transferase (359 aa).

The next 10 helical transmembrane spans lie at 3–23 (QIIIAAGIAILVSIMLTPVLI), 55–75 (VAILAGMWAGYFGSHLVGIAF), 84–104 (GLLVLALATMLGGVGFIDDFI), 117–137 (TSKTVGQILSALVFGVLVLQF), 156–176 (IATVAMPAAIFVLFCVILVMS), 187–207 (LDGLAGGCMAMVTGAYVIVTF), 231–251 (LAVIAAATAGACIGFLWWNAA), 255–275 (IFMGDTGSLALGGVIAGLSVT), 280–300 (LLAVVLGALFVAEIVSVVLQI), and 334–354 (FWLLTAIACGLGLALFYGEWL).

It belongs to the glycosyltransferase 4 family. MraY subfamily. It depends on Mg(2+) as a cofactor.

The protein localises to the cell membrane. It carries out the reaction UDP-N-acetyl-alpha-D-muramoyl-L-alanyl-gamma-D-glutamyl-meso-2,6-diaminopimeloyl-D-alanyl-D-alanine + di-trans,octa-cis-undecaprenyl phosphate = di-trans,octa-cis-undecaprenyl diphospho-N-acetyl-alpha-D-muramoyl-L-alanyl-D-glutamyl-meso-2,6-diaminopimeloyl-D-alanyl-D-alanine + UMP. It functions in the pathway cell wall biogenesis; peptidoglycan biosynthesis. In terms of biological role, catalyzes the initial step of the lipid cycle reactions in the biosynthesis of the cell wall peptidoglycan: transfers peptidoglycan precursor phospho-MurNAc-pentapeptide from UDP-MurNAc-pentapeptide onto the lipid carrier undecaprenyl phosphate, yielding undecaprenyl-pyrophosphoryl-MurNAc-pentapeptide, known as lipid I. In Mycobacteroides abscessus (strain ATCC 19977 / DSM 44196 / CCUG 20993 / CIP 104536 / JCM 13569 / NCTC 13031 / TMC 1543 / L948) (Mycobacterium abscessus), this protein is Phospho-N-acetylmuramoyl-pentapeptide-transferase.